The sequence spans 182 residues: Ribosome-recycling factor (182 aa).

The protein belongs to the RRF family.

Its subcellular location is the cytoplasm. In terms of biological role, responsible for the release of ribosomes from messenger RNA at the termination of protein biosynthesis. May increase the efficiency of translation by recycling ribosomes from one round of translation to another. This is Ribosome-recycling factor from Parasynechococcus marenigrum (strain WH8102).